Consider the following 69-residue polypeptide: uncharacterized protein (69 aa).

An N-terminal signal peptide occupies residues 1-19; the sequence is MKRIWVSLMIAITACSAHA.

This is an uncharacterized protein from Pasteurella multocida (strain Pm70).